The chain runs to 443 residues: Xaa-Pro dipeptidase (443 aa).

Mn(2+) contacts are provided by Asp246, Asp257, His339, Glu384, and Glu423.

This sequence belongs to the peptidase M24B family. Bacterial-type prolidase subfamily. Mn(2+) serves as cofactor.

The catalysed reaction is Xaa-L-Pro dipeptide + H2O = an L-alpha-amino acid + L-proline. Splits dipeptides with a prolyl residue in the C-terminal position. The polypeptide is Xaa-Pro dipeptidase (Escherichia coli (strain SMS-3-5 / SECEC)).